A 543-amino-acid polypeptide reads, in one-letter code: CTP synthase (543 aa).

Residues M1–L267 are amidoligase domain. S13 is a CTP binding site. S13 provides a ligand contact to UTP. S14–I19 serves as a coordination point for ATP. Residue Y54 participates in L-glutamine binding. Residue D71 participates in ATP binding. Mg(2+) contacts are provided by D71 and E141. Residues D148–E150, K188–Q193, and K224 contribute to the CTP site. Residues K188–Q193 and K224 each bind UTP. A Glutamine amidotransferase type-1 domain is found at K292–N534. G354 is a binding site for L-glutamine. The active-site Nucleophile; for glutamine hydrolysis is the C381. Residues L382–Q385, E405, and R462 contribute to the L-glutamine site. Catalysis depends on residues H507 and E509.

This sequence belongs to the CTP synthase family. Homotetramer.

The enzyme catalyses UTP + L-glutamine + ATP + H2O = CTP + L-glutamate + ADP + phosphate + 2 H(+). The catalysed reaction is L-glutamine + H2O = L-glutamate + NH4(+). It carries out the reaction UTP + NH4(+) + ATP = CTP + ADP + phosphate + 2 H(+). It participates in pyrimidine metabolism; CTP biosynthesis via de novo pathway; CTP from UDP: step 2/2. With respect to regulation, allosterically activated by GTP, when glutamine is the substrate; GTP has no effect on the reaction when ammonia is the substrate. The allosteric effector GTP functions by stabilizing the protein conformation that binds the tetrahedral intermediate(s) formed during glutamine hydrolysis. Inhibited by the product CTP, via allosteric rather than competitive inhibition. Functionally, catalyzes the ATP-dependent amination of UTP to CTP with either L-glutamine or ammonia as the source of nitrogen. Regulates intracellular CTP levels through interactions with the four ribonucleotide triphosphates. The chain is CTP synthase from Synechococcus sp. (strain WH7803).